A 98-amino-acid chain; its full sequence is 10 kDa chaperonin, mitochondrial (98 aa).

Residues 1–17 (MMKRLIPTFNRILVQRV) constitute a mitochondrion transit peptide. Residues 18-94 (IQPAKTESGI…LFRDEDVLGT (77 aa)) are cpn-10 domain.

It belongs to the GroES chaperonin family. As to quaternary structure, forms stable complexes with CPN60 in the presence of ATP.

The protein resides in the mitochondrion. Its function is as follows. Seems to function only as a co-chaperone, along with CPN60, and in certain cases is essential for the discharge of biologically active proteins from CPN60. This is 10 kDa chaperonin, mitochondrial (CPN10) from Arabidopsis thaliana (Mouse-ear cress).